Reading from the N-terminus, the 201-residue chain is Glutathione peroxidase 1 (201 aa).

Phosphoserine is present on serine 32. The active site involves selenocysteine 47. Selenocysteine 47 is a non-standard amino acid (selenocysteine). Residues lysine 86, lysine 112, and lysine 146 each carry the N6-acetyllysine; alternate modification. Lysine 86, lysine 112, and lysine 146 each carry N6-succinyllysine; alternate. A phosphoserine mark is found at serine 195 and serine 199.

The protein belongs to the glutathione peroxidase family. In terms of assembly, homotetramer. Interacts with MIEN1. During periods of oxidative stress, Sec-47 may react with a superoxide radical, irreversibly lose hydroselenide and be converted to dehydroalanine.

It is found in the cytoplasm. The protein resides in the mitochondrion. The enzyme catalyses 2 glutathione + H2O2 = glutathione disulfide + 2 H2O. It catalyses the reaction a hydroperoxy polyunsaturated fatty acid + 2 glutathione = a hydroxy polyunsaturated fatty acid + glutathione disulfide + H2O. The catalysed reaction is tert-butyl hydroperoxide + 2 glutathione = tert-butanol + glutathione disulfide + H2O. It carries out the reaction cumene hydroperoxide + 2 glutathione = 2-phenylpropan-2-ol + glutathione disulfide + H2O. The enzyme catalyses (13S)-hydroperoxy-(9Z,11E)-octadecadienoate + 2 glutathione = (13S)-hydroxy-(9Z,11E)-octadecadienoate + glutathione disulfide + H2O. It catalyses the reaction (9S)-hydroperoxy-(10E,12Z)-octadecadienoate + 2 glutathione = (9S)-hydroxy-(10E,12Z)-octadecadienoate + glutathione disulfide + H2O. The catalysed reaction is (5S)-hydroperoxy-(6E,8Z,11Z,14Z)-eicosatetraenoate + 2 glutathione = (5S)-hydroxy-(6E,8Z,11Z,14Z)-eicosatetraenoate + glutathione disulfide + H2O. It carries out the reaction (12S)-hydroperoxy-(5Z,8Z,10E,14Z)-eicosatetraenoate + 2 glutathione = (12S)-hydroxy-(5Z,8Z,10E,14Z)-eicosatetraenoate + glutathione disulfide + H2O. The enzyme catalyses (12R)-hydroperoxy-(5Z,8Z,10E,14Z)-eicosatetraenoate + 2 glutathione = (12R)-hydroxy-(5Z,8Z,10E,14Z)-eicosatetraenoate + glutathione disulfide + H2O. It catalyses the reaction (15S)-hydroperoxy-(5Z,8Z,11Z,13E)-eicosatetraenoate + 2 glutathione = (15S)-hydroxy-(5Z,8Z,11Z,13E)-eicosatetraenoate + glutathione disulfide + H2O. The catalysed reaction is (5S)-hydroperoxy-(6E,8Z,11Z,14Z,17Z)-eicosapentaenoate + 2 glutathione = (5S)-hydroxy-(6E,8Z,11Z,14Z,17Z)-eicosapentaenoate + glutathione disulfide + H2O. It carries out the reaction (12S)-hydroperoxy-(5Z,8Z,10E,14Z,17Z)-eicosapentaenoate + 2 glutathione = (12S)-hydroxy-(5Z,8Z,10E,14Z,17Z)-eicosapentaenoate + glutathione disulfide + H2O. The enzyme catalyses (15S)-hydroperoxy-(5Z,8Z,11Z,13E,17Z)-eicosapentaenoate + 2 glutathione = (15S)-hydroxy-(5Z,8Z,11Z,13E,17Z)-eicosapentaenoate + glutathione disulfide + H2O. It catalyses the reaction (15S)-hydroperoxy-(11Z,13E)-eicosadienoate + 2 glutathione = (15S)-hydroxy-(11Z,13E)-eicosadienoate + glutathione disulfide + H2O. The catalysed reaction is (17S)-hydroperoxy-(4Z,7Z,10Z,13Z,15E,19Z)-docosahexaenoate + 2 glutathione = (17S)-hydroxy-(4Z,7Z,10Z,13Z,15E,19Z)-docosahexaenoate + glutathione disulfide + H2O. Catalyzes the reduction of hydroperoxides in a glutathione-dependent manner thus regulating cellular redox homeostasis. Can reduce small soluble hydroperoxides such as H2O2, cumene hydroperoxide and tert-butyl hydroperoxide, as well as several fatty acid-derived hydroperoxides. In platelets catalyzes the reduction of 12-hydroperoxyeicosatetraenoic acid, the primary product of the arachidonate 12-lipoxygenase pathway. In Callithrix jacchus (White-tufted-ear marmoset), this protein is Glutathione peroxidase 1 (GPX1).